A 557-amino-acid chain; its full sequence is Formate--tetrahydrofolate ligase (557 aa).

65 to 72 (TPAGEGKT) serves as a coordination point for ATP.

The protein belongs to the formate--tetrahydrofolate ligase family. In terms of assembly, homotetramer.

The catalysed reaction is (6S)-5,6,7,8-tetrahydrofolate + formate + ATP = (6R)-10-formyltetrahydrofolate + ADP + phosphate. It participates in one-carbon metabolism; tetrahydrofolate interconversion. The protein is Formate--tetrahydrofolate ligase (fhs) of Methylorubrum extorquens (strain ATCC 14718 / DSM 1338 / JCM 2805 / NCIMB 9133 / AM1) (Methylobacterium extorquens).